Consider the following 981-residue polypeptide: Translation initiation factor IF-2 (981 aa).

The tract at residues phenylalanine 31–glutamate 370 is disordered. A compositionally biased stretch (low complexity) spans glycine 64–glycine 87. The segment covering glycine 88–proline 111 has biased composition (pro residues). The segment covering alanine 112–alanine 121 has biased composition (low complexity). Positions proline 136 to alanine 145 are enriched in pro residues. The span at alanine 146–alanine 165 shows a compositional bias: low complexity. Pro residues predominate over residues arginine 256–glycine 269. The segment covering alanine 270–alanine 279 has biased composition (low complexity). Over residues proline 280–glycine 339 the composition is skewed to gly residues. Basic residues predominate over residues arginine 356 to lysine 365. The tr-type G domain maps to serine 477–aspartate 649. The segment at glycine 486–threonine 493 is G1. Residue glycine 486–threonine 493 participates in GTP binding. The segment at glycine 511–histidine 515 is G2. The interval aspartate 536–glycine 539 is G3. Residues aspartate 536–histidine 540 and asparagine 590–aspartate 593 contribute to the GTP site. A G4 region spans residues asparagine 590–aspartate 593. Residues serine 626–lysine 628 form a G5 region.

This sequence belongs to the TRAFAC class translation factor GTPase superfamily. Classic translation factor GTPase family. IF-2 subfamily.

The protein localises to the cytoplasm. In terms of biological role, one of the essential components for the initiation of protein synthesis. Protects formylmethionyl-tRNA from spontaneous hydrolysis and promotes its binding to the 30S ribosomal subunits. Also involved in the hydrolysis of GTP during the formation of the 70S ribosomal complex. The polypeptide is Translation initiation factor IF-2 (Rhodococcus erythropolis (strain PR4 / NBRC 100887)).